Here is a 344-residue protein sequence, read N- to C-terminus: Heat-inducible transcription repressor HrcA (344 aa).

Belongs to the HrcA family.

Functionally, negative regulator of class I heat shock genes (grpE-dnaK-dnaJ and groELS operons). Prevents heat-shock induction of these operons. In Streptococcus pneumoniae (strain ATCC 700669 / Spain 23F-1), this protein is Heat-inducible transcription repressor HrcA.